The chain runs to 581 residues: Aspartate--tRNA ligase (581 aa).

Glutamate 170 is a binding site for L-aspartate. Residues 194-197 form an aspartate region; that stretch reads QLFK. Arginine 216 provides a ligand contact to L-aspartate. Residues 216 to 218 and glutamine 225 contribute to the ATP site; that span reads RDE. Residue histidine 439 participates in L-aspartate binding. Glutamate 468 provides a ligand contact to ATP. Arginine 475 contributes to the L-aspartate binding site. 520–523 serves as a coordination point for ATP; the sequence is GFDR.

It belongs to the class-II aminoacyl-tRNA synthetase family. Type 1 subfamily. In terms of assembly, homodimer.

Its subcellular location is the cytoplasm. It catalyses the reaction tRNA(Asp) + L-aspartate + ATP = L-aspartyl-tRNA(Asp) + AMP + diphosphate. Catalyzes the attachment of L-aspartate to tRNA(Asp) in a two-step reaction: L-aspartate is first activated by ATP to form Asp-AMP and then transferred to the acceptor end of tRNA(Asp). The chain is Aspartate--tRNA ligase from Thermosipho melanesiensis (strain DSM 12029 / CIP 104789 / BI429).